Consider the following 243-residue polypeptide: Chromosome partition protein MukE (243 aa).

A disordered region spans residues L223–E243. A compositionally biased stretch (acidic residues) spans E233–E243.

The protein belongs to the MukE family. Interacts, and probably forms a ternary complex, with MukF and MukB. The complex formation is stimulated by calcium or magnesium.

The protein resides in the cytoplasm. The protein localises to the nucleoid. Its function is as follows. Involved in chromosome condensation, segregation and cell cycle progression. May participate in facilitating chromosome segregation by condensation DNA from both sides of a centrally located replisome during cell division. Probably acts via its interaction with MukB and MukF. This chain is Chromosome partition protein MukE, found in Haemophilus influenzae (strain ATCC 51907 / DSM 11121 / KW20 / Rd).